Reading from the N-terminus, the 223-residue chain is Deoxyribose-phosphate aldolase (223 aa).

The active-site Proton donor/acceptor is the Asp89. The active-site Schiff-base intermediate with acetaldehyde is Lys152. Lys181 acts as the Proton donor/acceptor in catalysis.

It belongs to the DeoC/FbaB aldolase family. DeoC type 1 subfamily.

The protein resides in the cytoplasm. It carries out the reaction 2-deoxy-D-ribose 5-phosphate = D-glyceraldehyde 3-phosphate + acetaldehyde. Its pathway is carbohydrate degradation; 2-deoxy-D-ribose 1-phosphate degradation; D-glyceraldehyde 3-phosphate and acetaldehyde from 2-deoxy-alpha-D-ribose 1-phosphate: step 2/2. Catalyzes a reversible aldol reaction between acetaldehyde and D-glyceraldehyde 3-phosphate to generate 2-deoxy-D-ribose 5-phosphate. This is Deoxyribose-phosphate aldolase from Bacillus cereus (strain AH187).